The chain runs to 662 residues: Retaining alpha-galactosidase (662 aa).

Positions 1 to 19 are cleaved as a signal peptide; it reads MKKLTFLLLCVLCTLSLQA. Glu174 contributes to the Ca(2+) binding site. Catalysis depends on Asp415, which acts as the Nucleophile. 2 residues coordinate Ca(2+): Glu464 and Glu470. Residue Glu470 is the Proton donor/acceptor of the active site.

This sequence belongs to the glycosyl hydrolase 97 family. In terms of assembly, monomer. The cofactor is Ca(2+).

The enzyme catalyses Hydrolysis of terminal, non-reducing alpha-D-galactose residues in alpha-D-galactosides, including galactose oligosaccharides, galactomannans and galactolipids.. Its activity is regulated as follows. Inhibited by EDTA in vitro. In terms of biological role, galactosidase that is able to hydrolyze the alpha-1,6 disaccharide melibiose and the synthetic p-nitrophenyl alpha-galactoside substrate (pNP-Gal), with retention of the anomeric configuration. Does not hydrolyze DNP-Glc or pNP-Glc. This Bacteroides thetaiotaomicron (strain ATCC 29148 / DSM 2079 / JCM 5827 / CCUG 10774 / NCTC 10582 / VPI-5482 / E50) protein is Retaining alpha-galactosidase.